Reading from the N-terminus, the 393-residue chain is Glutamyl-tRNA reductase (393 aa).

Substrate-binding positions include 47 to 50, serine 98, 103 to 105, and glutamine 109; these read TCSR and ETD. Catalysis depends on cysteine 48, which acts as the Nucleophile. 177–182 serves as a coordination point for NADP(+); the sequence is GAGAVG.

This sequence belongs to the glutamyl-tRNA reductase family. As to quaternary structure, homodimer.

It carries out the reaction (S)-4-amino-5-oxopentanoate + tRNA(Glu) + NADP(+) = L-glutamyl-tRNA(Glu) + NADPH + H(+). Its pathway is porphyrin-containing compound metabolism; protoporphyrin-IX biosynthesis; 5-aminolevulinate from L-glutamyl-tRNA(Glu): step 1/2. Its function is as follows. Catalyzes the NADPH-dependent reduction of glutamyl-tRNA(Glu) to glutamate 1-semialdehyde (GSA). In Pyrobaculum neutrophilum (strain DSM 2338 / JCM 9278 / NBRC 100436 / V24Sta) (Thermoproteus neutrophilus), this protein is Glutamyl-tRNA reductase.